The following is a 229-amino-acid chain: Matrix protein (229 aa).

The dynamin binding motif lies at 2–4 (QRL). The PPXY motif motif lies at 30–33 (PPSY). The PTAP/PSAP motif motif lies at 42–45 (PTAP).

The protein belongs to the vesiculoviruses matrix protein family. Homomultimer. Interacts with viral nucleocapsid; this interaction contributes to the virion assembly. Interacts with the viral envelope glycoprotein; this interaction contributes to the virion assembly. Interacts with host RAE1-NUP98 complex. Interacts with host NEDD4 and TSG101. Interacts with host dynamin. Interacts with host NDUFAF4; the interaction inhibits viral propagation and is independent of interferon activation. Interacts with host GTF2H5; the interaction may inhibit host transcription. Interacts with host DRG1. Interaction with host CTDNEP1. Interaction with host ABCE1. Phosphorylated by host.

Its subcellular location is the virion. The protein resides in the host endomembrane system. It is found in the host nucleus membrane. The protein localises to the host nucleus. It localises to the host cytoplasm. Functionally, forms a double layer around the helical nucleocapsid, the inner matrix layer binding to the N helix and the outer matrix layer binding to the envelope glycoprotein. Plays a major role in assembly and budding of virion, by recruiting cellular partners of the ESCRT complexes that play a key role in releasing the budding particle from the host membrane. Condensates the ribonucleocapsid core during virus assembly. Inhibits the host mRNA nuclear export thereby inducing the shut off of cellular transcription and preventing the interferon signaling and the establishment of antiviral state in infected cells. This shutoff presumably inhibits interferon signaling and thus establishment of antiviral state in virus infected cells. Induces cell-rounding, cytoskeleton disorganization and apoptosis in infected cell. Inhibits host transcription, possibly through interaction with host DNA repair factor IIH/TFIIH GTF2H5 subunit. The chain is Matrix protein (M) from Homo sapiens (Human).